A 320-amino-acid polypeptide reads, in one-letter code: Putative thiosulfate sulfurtransferase (320 aa).

The N-terminal stretch at 1 to 37 is a signal peptide; the sequence is MSVRSLRWPRQKAFLAVISLVVAVLLAVPGWLTPATA. Rhodanese domains follow at residues 56-166 and 194-315; these read NNKQ…PVTK and LTGK…PVET. The Cysteine persulfide intermediate role is filled by Cys-274.

The protein resides in the periplasm. It catalyses the reaction thiosulfate + hydrogen cyanide = thiocyanate + sulfite + 2 H(+). May be a sulfotransferase involved in the transport of sulfate. Displays very low rhodanese activity. The sequence is that of Putative thiosulfate sulfurtransferase (rhdA) from Synechococcus elongatus (strain ATCC 33912 / PCC 7942 / FACHB-805) (Anacystis nidulans R2).